The following is a 616-amino-acid chain: Chaperone protein HscA homolog (616 aa).

This sequence belongs to the heat shock protein 70 family.

Chaperone involved in the maturation of iron-sulfur cluster-containing proteins. Has a low intrinsic ATPase activity which is markedly stimulated by HscB. This is Chaperone protein HscA homolog from Histophilus somni (strain 2336) (Haemophilus somnus).